We begin with the raw amino-acid sequence, 404 residues long: MIHQPPAGARDLLPLEVAQKAWINDNLQRVFQQWGYQRIVTSTLEWLETLTAGGAVDRTKVIQLQTAESQALGLRPELTASIARAAVTRMAENTFPQRLCYRANVFRHPPRGSHGKQMEFYQAGVELLFAAGIVADAEILLLLADSLDALGLEDWQLILGEAALGRSLLDPFPEPVRETVRHCVANLDRVGLQELPLDEDLKAYALDIFDLRGEPETILARVSQFDLGPEAQEIVANLKALFALLAGSTQKQLPIILDLTLIQTFDYYTGIVFEVVNFANHQSYILGQGGRYDQLLGLYHPQRENHPGIGFCLNIEELHTCLLTSPQLPKQLAGSAWLVIATEPNAQQQVFHYAQTLRQGDEMVRVEVELGGRSPAEIYAYARSSHITHLAWIDPSGEPKLETL.

Belongs to the class-II aminoacyl-tRNA synthetase family. HisZ subfamily. In terms of assembly, heteromultimer composed of HisG and HisZ subunits.

It is found in the cytoplasm. The protein operates within amino-acid biosynthesis; L-histidine biosynthesis; L-histidine from 5-phospho-alpha-D-ribose 1-diphosphate: step 1/9. Required for the first step of histidine biosynthesis. May allow the feedback regulation of ATP phosphoribosyltransferase activity by histidine. This chain is ATP phosphoribosyltransferase regulatory subunit, found in Picosynechococcus sp. (strain ATCC 27264 / PCC 7002 / PR-6) (Agmenellum quadruplicatum).